Reading from the N-terminus, the 1866-residue chain is Protein NLRC5 (1866 aa).

The disordered stretch occupies residues 105 to 135 (GAEGKSQPESQLHHGLKRPHQSCGSSPRRKQ). Residues 222–539 (RVTVLLGKAG…PKVNKDTLTQ (318 aa)) enclose the NACHT domain. 228–235 (GKAGMGKT) is a binding site for ATP. 26 LRR repeats span residues 599-622 (LKKL…VDET), 713-737 (MGRL…LVKA), 741-765 (CPQL…IVEV), 769-792 (LPRL…CLAR), 869-892 (GPHL…LMAE), 897-921 (LHIA…VLRA), 930-953 (ELHI…EQKG), 976-1000 (SRRM…ALGG), 1004-1026 (LGHL…RLAQ), 1031-1058 (LGAL…CFST), 1138-1161 (LELQ…CLPQ), 1162-1184 (LPQL…FLLA), 1242-1265 (CKDL…CLLE), 1272-1294 (ISGL…LLET), 1462-1488 (CARL…LLQS), 1493-1516 (LSEL…HLAS), 1521-1544 (CHHL…ALMR), 1554-1577 (RLDL…LSQM), 1578-1600 (TCLQ…HLSE), 1605-1628 (ATSL…HLAT), 1633-1656 (LPEL…QLAE), 1661-1684 (CRRL…GLAQ), 1687-1714 (PQHL…ALDG), 1715-1739 (SPHL…CMEL), 1741-1762 (LLRQ…LLTS), and 1795-1818 (MGRL…LLAE).

Belongs to the NLRP family. Interacts with CHUK and IKBKB; prevents CHUK and IKBKB phosphorylation and inhibits their kinase activity. Interacts with RIGI and IFIH1; blocks the interaction of MAVS to RIGI. Expressed in spleen, thymus, lung, brain, tonsil, heart and prostate.

It localises to the cytoplasm. Functionally, probable regulator of the NF-kappa-B and type I interferon signaling pathways. May also regulate the type II interferon signaling pathway. Plays a role in homeostatic control of innate immunity and in antiviral defense mechanisms. The chain is Protein NLRC5 (NLRC5) from Homo sapiens (Human).